Reading from the N-terminus, the 412-residue chain is Regulator of microtubule dynamics protein 2 (412 aa).

The helical transmembrane segment at 9–28 (LLLGIMAGTAGISLLVLWYH) threads the bilayer. Serine 51 is subject to Phosphoserine. Positions 72–110 (QLQILEKLNELLTNVEELKEEIKFLKETIPKLEECIQDE) form a coiled coil. Serine 121 is subject to Phosphoserine. Positions 122 to 153 (PQHRARKKKTTTTTVQRPATSNSSEEAESEGG) are disordered. Phosphothreonine is present on threonine 141. Tyrosine 154 carries the phosphotyrosine modification. Phosphothreonine is present on residues threonine 156 and threonine 159.

Belongs to the RMDN family. In terms of assembly, interacts with microtubules.

It is found in the membrane. It localises to the cytoplasm. Its subcellular location is the cytoskeleton. The protein resides in the spindle. The protein localises to the spindle pole. This chain is Regulator of microtubule dynamics protein 2 (Rmdn2), found in Rattus norvegicus (Rat).